We begin with the raw amino-acid sequence, 412 residues long: AA9 family lytic polysaccharide monooxygenase A (412 aa).

The N-terminal stretch at 1 to 20 (MKTTTYSLLALAAASKLASA) is a signal peptide. Residues H21 and H103 each contribute to the Cu(2+) site. A disulfide bond links C63 and C186. Residue N151 is glycosylated (N-linked (GlcNAc...) asparagine). H172 lines the O2 pocket. Y183 is a Cu(2+) binding site. N-linked (GlcNAc...) asparagine glycans are attached at residues N334 and N385. In terms of domain architecture, CBM1 spans 373-409 (GVAKMYERCGGINHTGPTTCESGSVCKKWNPYYYQCV).

It belongs to the polysaccharide monooxygenase AA9 family. Requires Cu(2+) as cofactor.

The protein localises to the secreted. It catalyses the reaction [(1-&gt;4)-beta-D-glucosyl]n+m + reduced acceptor + O2 = 4-dehydro-beta-D-glucosyl-[(1-&gt;4)-beta-D-glucosyl]n-1 + [(1-&gt;4)-beta-D-glucosyl]m + acceptor + H2O.. Functionally, lytic polysaccharide monooxygenase (LPMO) that depolymerizes crystalline and amorphous polysaccharides via the oxidation of scissile alpha- or beta-(1-4)-glycosidic bonds, yielding C4 oxidation products. Catalysis by LPMOs requires the reduction of the active-site copper from Cu(II) to Cu(I) by a reducing agent and H(2)O(2) or O(2) as a cosubstrate. This is AA9 family lytic polysaccharide monooxygenase A (eglD) from Aspergillus niger (strain ATCC MYA-4892 / CBS 513.88 / FGSC A1513).